The chain runs to 120 residues: Protein BEX4 (120 aa).

A disordered region spans residues 1–54 (MESKEELAANNLNGENAQQENEGGEQAPTQNEEESRHLGGGEGQKPGGNIRRGR). Residues 8-27 (AANNLNGENAQQENEGGEQA) are compositionally biased toward low complexity. Positions 31-90 (NEEESRHLGGGEGQKPGGNIRRGRVRRLVPNFRWAIPNRHIEHNEARDDVERFVGQMMEI) are interaction with SIRT2. Residues 31–120 (NEEESRHLGG…DNHYDFCLIP (90 aa)) are interaction with alpha-tubulin. Zn(2+) is bound at residue cysteine 117.

It belongs to the BEX family. Interacts with alpha-tubulin. Interacts with SIRT2. In terms of processing, ubiquitinated and degraded by the proteasome. Very high expression in heart, skeletal muscle, liver, and kidney. The levels of expression are uniform throughout the brain.

It is found in the cytoplasm. The protein localises to the cytoskeleton. The protein resides in the spindle pole. It localises to the nucleus. In terms of biological role, may play a role in microtubule deacetylation by negatively regulating the SIRT2 deacetylase activity toward alpha-tubulin and thereby participate in the control of cell cycle progression and genomic stability. In absence of reductive stress, acts as a pseudosubstrate for the CRL2(FEM1B) complex: associates with FEM1B via zinc, thereby preventing association between FEM1B and its substrates. This chain is Protein BEX4, found in Homo sapiens (Human).